The sequence spans 64 residues: Large ribosomal subunit protein bL35 (64 aa).

Disordered stretches follow at residues 1 to 22 (MPKA…TGKI) and 34 to 64 (EHKP…LLNG). Residues 34–48 (EHKPSTRTRRLDGHT) are compositionally biased toward basic and acidic residues. The span at 50–64 (VSANDTQRVNSLLNG) shows a compositional bias: polar residues.

It belongs to the bacterial ribosomal protein bL35 family.

The polypeptide is Large ribosomal subunit protein bL35 (Mycobacterium leprae (strain Br4923)).